The following is a 194-amino-acid chain: MSSNVIVLCVSALFIQCAVSQCVGRIGSLRGGPFDGWGYDGLGYDGFGIGGWNGRGCGGLGDDIAAAAALGASHGGTLAVVSTSAAPTGLGIASENVYEGSVGVCGNLPFLGTADVAGEFPTAGLGGIDYTCGDGAVGITVENAINGISNVGYGLAPGIVGPAVAAPALGYGPGISSLGYNTAGRGCGCGANYY.

The N-terminal stretch at 1 to 20 (MSSNVIVLCVSALFIQCAVS) is a signal peptide. Residues 22–72 (CVGRIGSLRGGPFDGWGYDGLGYDGFGIGGWNGRGCGGLGDDIAAAAALGA) form a left arm region. Residues 73–128 (SHGGTLAVVSTSAAPTGLGIASENVYEGSVGVCGNLPFLGTADVAGEFPTAGLGGI) form a central domain region. The interval 129–194 (DYTCGDGAVG…RGCGCGANYY (66 aa)) is right arm (Gly-rich tandem repeats).

The protein belongs to the chorion protein family.

Its function is as follows. This protein is one of many from the eggshell of the silk moth. The sequence is that of Chorion class B protein ERB4 from Bombyx mori (Silk moth).